A 248-amino-acid polypeptide reads, in one-letter code: Probable N-acetylglucosaminyl-phosphatidylinositol de-N-acetylase (248 aa).

Residues 1 to 7 (MIWFWST) are Lumenal-facing. The helical transmembrane segment at 8–24 (LLVTAIAVLSTANESSS) threads the bilayer. Over 25–248 (GQEKLAVESI…MSNNVLKRAT (224 aa)) the chain is Cytoplasmic.

It belongs to the PIGL family.

The protein resides in the endoplasmic reticulum membrane. It catalyses the reaction a 6-(N-acetyl-alpha-D-glucosaminyl)-1-(1,2-diacyl-sn-glycero-3-phospho)-1D-myo-inositol + H2O = a 6-(alpha-D-glucosaminyl)-1-(1,2-diacyl-sn-glycero-3-phospho)-1D-myo-inositol + acetate. It functions in the pathway glycolipid biosynthesis; glycosylphosphatidylinositol-anchor biosynthesis. Functionally, involved in the second step of GPI biosynthesis. De-N-acetylation of N-acetylglucosaminyl-phosphatidylinositol. This Schizosaccharomyces pombe (strain 972 / ATCC 24843) (Fission yeast) protein is Probable N-acetylglucosaminyl-phosphatidylinositol de-N-acetylase (gpi12).